The following is a 545-amino-acid chain: Probable bifunctional tRNA threonylcarbamoyladenosine biosynthesis protein (545 aa).

Residues 1–329 (MKNTFILGIE…YRTDDVKVTW (329 aa)) are kae1. Fe cation contacts are provided by H113, H117, and Y134. Residues 134 to 138 (YVSGA), D166, G179, E183, and N262 contribute to the L-threonylcarbamoyladenylate site. D290 is a Fe cation binding site. One can recognise a Protein kinase domain in the interval 340–545 (EISPGTSLKL…EEIKKRARYA (206 aa)). Residues 353–361 (LDNGAEAIV) and K375 contribute to the ATP site. D462 functions as the Proton acceptor; for kinase activity in the catalytic mechanism.

This sequence in the N-terminal section; belongs to the KAE1 / TsaD family. It in the C-terminal section; belongs to the protein kinase superfamily. Tyr protein kinase family. BUD32 subfamily. In terms of assembly, component of the KEOPS complex that consists of Kae1, Bud32, Cgi121 and Pcc1; the whole complex dimerizes. Fe(2+) is required as a cofactor.

The protein localises to the cytoplasm. The catalysed reaction is L-seryl-[protein] + ATP = O-phospho-L-seryl-[protein] + ADP + H(+). It catalyses the reaction L-threonyl-[protein] + ATP = O-phospho-L-threonyl-[protein] + ADP + H(+). The enzyme catalyses L-threonylcarbamoyladenylate + adenosine(37) in tRNA = N(6)-L-threonylcarbamoyladenosine(37) in tRNA + AMP + H(+). Its function is as follows. Required for the formation of a threonylcarbamoyl group on adenosine at position 37 (t(6)A37) in tRNAs that read codons beginning with adenine. Is a component of the KEOPS complex that is probably involved in the transfer of the threonylcarbamoyl moiety of threonylcarbamoyl-AMP (TC-AMP) to the N6 group of A37. The Kae1 domain likely plays a direct catalytic role in this reaction. The Bud32 domain probably displays kinase activity that regulates Kae1 function. In Methanosarcina barkeri (strain Fusaro / DSM 804), this protein is Probable bifunctional tRNA threonylcarbamoyladenosine biosynthesis protein.